Consider the following 214-residue polypeptide: Large ribosomal subunit protein uL3 (214 aa).

Q151 carries the post-translational modification N5-methylglutamine.

This sequence belongs to the universal ribosomal protein uL3 family. As to quaternary structure, part of the 50S ribosomal subunit. Forms a cluster with proteins L14 and L19. Methylated by PrmB.

One of the primary rRNA binding proteins, it binds directly near the 3'-end of the 23S rRNA, where it nucleates assembly of the 50S subunit. The sequence is that of Large ribosomal subunit protein uL3 from Magnetococcus marinus (strain ATCC BAA-1437 / JCM 17883 / MC-1).